A 191-amino-acid polypeptide reads, in one-letter code: Cell division protein SepF (191 aa).

Residues 153–178 (FPEEVSPSNISSKKTSPYSLETNTTP) show a composition bias toward polar residues. Residues 153-191 (FPEEVSPSNISSKKTSPYSLETNTTPEPAWGESKLSAFS) are disordered.

Belongs to the SepF family. As to quaternary structure, homodimer. Interacts with FtsZ.

The protein localises to the cytoplasm. Functionally, cell division protein that is part of the divisome complex and is recruited early to the Z-ring. Probably stimulates Z-ring formation, perhaps through the cross-linking of FtsZ protofilaments. Its function overlaps with FtsA. In Prochlorococcus marinus (strain MIT 9515), this protein is Cell division protein SepF.